Here is a 150-residue protein sequence, read N- to C-terminus: Guanine nucleotide-binding protein subunit gamma 2 (150 aa).

A compositionally biased stretch (acidic residues) spans methionine 1–glutamine 11. Residues methionine 1–arginine 59 form a disordered region. The stretch at glycine 65–serine 97 forms a coiled coil. The region spanning alanine 71–arginine 137 is the G protein gamma domain.

G proteins are composed of 3 units, alpha, beta and gamma. Interacts with the beta subunit RGB1.

Its subcellular location is the cell membrane. Functionally, guanine nucleotide-binding proteins (G proteins) are involved as modulators or transducers in various transmembrane signaling systems. This Oryza sativa subsp. indica (Rice) protein is Guanine nucleotide-binding protein subunit gamma 2.